A 227-amino-acid chain; its full sequence is GTP:AMP phosphotransferase AK3, mitochondrial (227 aa).

5 residues coordinate GTP: G17, G19, K20, G21, and T22. K20 carries the post-translational modification N6-succinyllysine. K34 carries the N6-acetyllysine modification. S37 is modified (phosphoserine). The interval S37–I66 is NMP. AMP-binding residues include S38 and R43. At K57 the chain carries N6-succinyllysine. Residue K64 participates in AMP binding. N6-acetyllysine; alternate is present on residues K64 and K80. K64 and K80 each carry N6-succinyllysine; alternate. AMP contacts are provided by G91, R94, and Q98. Residues A127–D164 form an LID region. Residues R128, Y138, N139, R161, and R172 each coordinate GTP. N6-acetyllysine; alternate occurs at positions 174 and 189. An N6-succinyllysine; alternate mark is found at K174 and K189. Residue T201 participates in GTP binding. Position 203 is an N6-acetyllysine (K203).

Belongs to the adenylate kinase family. AK3 subfamily. As to quaternary structure, monomer.

Its subcellular location is the mitochondrion matrix. The catalysed reaction is a ribonucleoside 5'-triphosphate + AMP = a ribonucleoside 5'-diphosphate + ADP. It carries out the reaction GTP + AMP = GDP + ADP. The enzyme catalyses ITP + AMP = IDP + ADP. Functionally, mitochondrial adenylate kinase with a specific GTP:AMP phosphotransferase activity. Could also use ITP as phosphate donor. Its physiological function is to recycle GTP into GDP which is necessary for the TCA cycle in the mitochondrial matrix. The polypeptide is GTP:AMP phosphotransferase AK3, mitochondrial (Pongo abelii (Sumatran orangutan)).